The primary structure comprises 445 residues: Histamine H3 receptor (445 aa).

At 1 to 39 (MERAPPDGLMNASGALAGEAAAAGGARGFSAAWTAVLAA) the chain is on the extracellular side. Residue Asn-11 is glycosylated (N-linked (GlcNAc...) asparagine). A helical transmembrane segment spans residues 40-60 (LMALLIVATVLGNALVMLAFV). At 61–70 (ADSSLRTQNN) the chain is on the cytoplasmic side. A helical transmembrane segment spans residues 71 to 91 (FFLLNLAISDFLVGAFCIPLY). At 92 to 108 (VPYVLTGRWTFGRGLCK) the chain is on the extracellular side. A disulfide bridge connects residues Cys-107 and Cys-188. Residues 109–129 (LWLVVDYLLCASSVFNIVLIS) form a helical membrane-spanning segment. Over 130–156 (YDRFLSVTRAVSYRAQQGDTRRAVRKM) the chain is Cytoplasmic. The chain crosses the membrane as a helical span at residues 157 to 177 (ALVWVLAFLLYGPAILSWEYL). Residues 178–196 (SGGSSIPEGHCYAEFFYNW) lie on the Extracellular side of the membrane. The helical transmembrane segment at 197 to 217 (YFLITASTLEFFTPFLSVTFF) threads the bilayer. Topologically, residues 218-359 (NLSIYLNIQR…LSRDKKVAKS (142 aa)) are cytoplasmic. Disordered regions lie at residues 234–259 (DGGREAGPEPPPDAQPSPPPAPPSCW) and 273–336 (HRYG…LEKR). Residues 241 to 256 (PEPPPDAQPSPPPAPP) show a composition bias toward pro residues. Residues 289 to 299 (AGLGGGSGGGA) show a composition bias toward gly residues. Residues 300 to 312 (AASPTSSSGSSSR) show a composition bias toward low complexity. Residues 360–380 (LAIIVSIFGLCWAPYTLLMII) form a helical membrane-spanning segment. The Extracellular portion of the chain corresponds to 381–396 (RAACHGHCVPDYWYET). A helical transmembrane segment spans residues 397–417 (SFWLLWANSAVNPVLYPLCHY). At 418–445 (SFRRAFTKLLCPQKLKVQPHGSLEQCWK) the chain is on the cytoplasmic side. A Phosphoserine modification is found at Ser-439.

It belongs to the G-protein coupled receptor 1 family.

Its subcellular location is the cell membrane. Its function is as follows. The H3 subclass of histamine receptors could mediate the histamine signals in CNS and peripheral nervous system. Signals through the inhibition of adenylate cyclase and displays high constitutive activity (spontaneous activity in the absence of agonist). This is Histamine H3 receptor (Hrh3) from Mus musculus (Mouse).